The following is a 447-amino-acid chain: ATP-dependent protease ATPase subunit HslU (447 aa).

ATP contacts are provided by residues isoleucine 17, 59-64 (GVGKTE), aspartate 256, glutamate 321, and arginine 393.

It belongs to the ClpX chaperone family. HslU subfamily. As to quaternary structure, a double ring-shaped homohexamer of HslV is capped on each side by a ring-shaped HslU homohexamer. The assembly of the HslU/HslV complex is dependent on binding of ATP.

It localises to the cytoplasm. Its function is as follows. ATPase subunit of a proteasome-like degradation complex; this subunit has chaperone activity. The binding of ATP and its subsequent hydrolysis by HslU are essential for unfolding of protein substrates subsequently hydrolyzed by HslV. HslU recognizes the N-terminal part of its protein substrates and unfolds these before they are guided to HslV for hydrolysis. In Pseudomonas entomophila (strain L48), this protein is ATP-dependent protease ATPase subunit HslU.